A 338-amino-acid chain; its full sequence is Fructose-1,6-bisphosphatase 1 (338 aa).

Thr2 bears the N-acetylthreonine mark. AMP-binding positions include 18–22 (VMEEG) and 28–32 (TGEMT). 2 residues coordinate Mg(2+): Asp69 and Glu98. Position 113 to 114 (113 to 114 (KY)) interacts with AMP. Mg(2+) is bound by residues Asp119, Leu121, and Asp122. 122–125 (DGSS) serves as a coordination point for substrate. Residue Arg141 participates in AMP binding. An N6-succinyllysine modification is found at Lys151. The residue at position 208 (Ser208) is a Phosphoserine; by PKA. Substrate-binding positions include 213–216 (NEGY), 244–249 (RYVGSM), Tyr265, and 275–277 (KLR). Phosphotyrosine is present on residues Tyr216, Tyr245, and Tyr265. Glu281 lines the Mg(2+) pocket.

Belongs to the FBPase class 1 family. As to quaternary structure, homotetramer. Requires Mg(2+) as cofactor.

It carries out the reaction beta-D-fructose 1,6-bisphosphate + H2O = beta-D-fructose 6-phosphate + phosphate. It functions in the pathway carbohydrate biosynthesis; gluconeogenesis. With respect to regulation, subject to complex allosteric regulation. The enzyme can assume an active R-state, or an inactive T-state. Intermediate conformations may exist. AMP acts as an allosteric inhibitor. AMP binding affects the turnover of bound substrate and not the affinity for substrate. Fructose 2,6-bisphosphate acts as a competitive inhibitor. Fructose 2,6-bisphosphate and AMP have synergistic effects. Functionally, catalyzes the hydrolysis of fructose 1,6-bisphosphate to fructose 6-phosphate in the presence of divalent cations, acting as a rate-limiting enzyme in gluconeogenesis. Plays a role in regulating glucose sensing and insulin secretion of pancreatic beta-cells. Appears to modulate glycerol gluconeogenesis in liver. Important regulator of appetite and adiposity; increased expression of the protein in liver after nutrient excess increases circulating satiety hormones and reduces appetite-stimulating neuropeptides and thus seems to provide a feedback mechanism to limit weight gain. The chain is Fructose-1,6-bisphosphatase 1 (FBP1) from Sus scrofa (Pig).